The chain runs to 806 residues: NADH:(hydroxy)cinnamate reductase subunit CrdB (806 aa).

Serine 257 bears the FMN phosphoryl serine mark. The FAD site is built by alanine 310, glutamate 329, asparagine 337, threonine 338, glycine 342, glycine 343, and aspartate 576. The active-site Proton donor is arginine 635. FAD-binding residues include histidine 742, glutamate 771, alanine 786, and leucine 787.

The protein belongs to the FAD-dependent oxidoreductase 2 family. FRD/SDH subfamily. As to quaternary structure, NADH:(hydroxy)cinnamate reductase Crd is a heterodimer composed of CrdA and CrdB subunits, encoded by adjacent genes. FAD is required as a cofactor. It depends on FMN as a cofactor. Is flavinylated on Ser-257 by ApbE, encoded in a neighboring gene. Covalent attachment of FMN is essential for catalytic activity.

It carries out the reaction 3-phenylpropanoate + NAD(+) = (E)-cinnamate + NADH + H(+). It catalyses the reaction 3-(3,4-dihydroxyphenyl)propanoate + NAD(+) = (E)-caffeate + NADH + H(+). The catalysed reaction is phloretate + NAD(+) = (E)-4-coumarate + NADH + H(+). The enzyme catalyses dihydroferulate + NAD(+) = (E)-ferulate + NADH + H(+). With respect to regulation, is inactivated by molecular oxygen, allowing regulation of Crd activity by medium oxygen level. In terms of biological role, component of the NADH:(hydroxy)cinnamate reductase Crd that catalyzes the reduction of the double bond in cinnamate, p-coumarate, caffeate, and ferulate under anaerobic conditions with NADH or methyl viologen as the electron donor. Is moderately active against acrylate and practically inactive against urocanate, fumarate, methacrylate and crotonate. CrdB is the catalytic subunit that binds substrates. Is likely involved in protecting V.ruber from (hydroxy)cinnamate poisoning. The sequence is that of NADH:(hydroxy)cinnamate reductase subunit CrdB from Vibrio ruber (strain DSM 16370 / JCM 11486 / BCRC 17186 / CECT 7878 / LMG 23124 / VR1).